The chain runs to 302 residues: Ribosome-binding factor PSRP1, chloroplastic (302 aa).

Residues 1 to 66 constitute a chloroplast transit peptide; it reads MATLCTSAIN…SRNKPNVVCM (66 aa).

In terms of assembly, binds to the mRNA channel of the chloroplast small ribosomal subunit and interacts with 16S sRNA nucleotides at the A-site and P-site.

The protein localises to the plastid. It localises to the chloroplast stroma. In terms of biological role, ribosome-binding factor involved in light- and temperature-dependent control of protein synthesis. Interacts with 16S sRNA nucleotides at the A-site and P-site, where it protects the decoding center and inhibits translation by preventing tRNA binding. Stabilizes 70S ribosomes against dissociation. May be recycled by the combined action of ribosome-recycling factor (RRF) and EF-G. The protein is Ribosome-binding factor PSRP1, chloroplastic (PSRP1) of Spinacia oleracea (Spinach).